We begin with the raw amino-acid sequence, 255 residues long: Transmembrane protein 81 (255 aa).

Positions Met1–Ala30 are cleaved as a signal peptide. The Extracellular portion of the chain corresponds to Ile31 to Ser226. Asn45 is a glycosylation site (N-linked (GlcNAc...) asparagine). The Ig-like domain occupies Thr83–Val171. A disulfide bond links Cys104 and Cys160. A helical membrane pass occupies residues Ala227–Cys247. Topologically, residues Ala248–Gln255 are cytoplasmic.

Forms a complex with IZUMO1 and SPACA6 on spermatocyte cell membrane required for fertilization. Highly expressed in sperm (at protein level).

The protein localises to the cell membrane. Its function is as follows. Essential fertilization factor required for male fertility. Part of a conserved trimeric sperm complex with the essential fertilization factors IZUMO1 and SPACA6 which bridges sperm and oocyte membranes during fertilization by binding to IZUMO1R/JUNO on the oocyte. This chain is Transmembrane protein 81, found in Homo sapiens (Human).